The following is a 706-amino-acid chain: Glycine--tRNA ligase beta subunit (706 aa).

The protein belongs to the class-II aminoacyl-tRNA synthetase family. In terms of assembly, tetramer of two alpha and two beta subunits.

It localises to the cytoplasm. The enzyme catalyses tRNA(Gly) + glycine + ATP = glycyl-tRNA(Gly) + AMP + diphosphate. This chain is Glycine--tRNA ligase beta subunit, found in Acidobacterium capsulatum (strain ATCC 51196 / DSM 11244 / BCRC 80197 / JCM 7670 / NBRC 15755 / NCIMB 13165 / 161).